A 301-amino-acid polypeptide reads, in one-letter code: General transcription and DNA repair factor IIH subunit TFB4 (301 aa).

The C4-type zinc finger occupies 259–276 (CSVCLSIFCEHHKKCSTC).

Belongs to the TFB4 family. As to quaternary structure, component of the 7-subunit TFIIH core complex composed of XPB, XPD, TFB1/GTF2H1, GTF2H2/P44, TFB4/GTF2H3, TFB2/GTF2H4 and TFB5/GTF2H5, which is active in NER. The core complex associates with the 3-subunit CDK-activating kinase (CAK) module composed of CYCH1/cyclin H1, CDKD and MAT1/At4g30820 to form the 10-subunit holoenzyme (holo-TFIIH) active in transcription.

The protein resides in the nucleus. Component of the general transcription and DNA repair factor IIH (TFIIH) core complex, which is involved in general and transcription-coupled nucleotide excision repair (NER) of damaged DNA and, when complexed to CAK, in RNA transcription by RNA polymerase II. In NER, TFIIH acts by opening DNA around the lesion to allow the excision of the damaged oligonucleotide and its replacement by a new DNA fragment. In transcription, TFIIH has an essential role in transcription initiation. When the pre-initiation complex (PIC) has been established, TFIIH is required for promoter opening and promoter escape. Phosphorylation of the C-terminal tail (CTD) of the largest subunit of RNA polymerase II by the kinase module CAK controls the initiation of transcription. This Arabidopsis thaliana (Mouse-ear cress) protein is General transcription and DNA repair factor IIH subunit TFB4.